The sequence spans 337 residues: Ketol-acid reductoisomerase (NADP(+)) (337 aa).

The KARI N-terminal Rossmann domain occupies 1 to 180 (MFYEKDADVD…GGGKSGIIET (180 aa)). NADP(+) contacts are provided by residues 22 to 25 (YGSQ), Arg-46, Ser-49, Ser-51, and 81 to 84 (DELQ). His-106 is a catalytic residue. Residue Gly-132 participates in NADP(+) binding. The region spanning 181-326 (TFKDECETDL…AELRAMMPWI (146 aa)) is the KARI C-terminal knotted domain. Mg(2+) is bound by residues Asp-189, Glu-193, Glu-225, and Glu-229. Position 250 (Ser-250) interacts with substrate.

This sequence belongs to the ketol-acid reductoisomerase family. Mg(2+) serves as cofactor.

It catalyses the reaction (2R)-2,3-dihydroxy-3-methylbutanoate + NADP(+) = (2S)-2-acetolactate + NADPH + H(+). It carries out the reaction (2R,3R)-2,3-dihydroxy-3-methylpentanoate + NADP(+) = (S)-2-ethyl-2-hydroxy-3-oxobutanoate + NADPH + H(+). It participates in amino-acid biosynthesis; L-isoleucine biosynthesis; L-isoleucine from 2-oxobutanoate: step 2/4. It functions in the pathway amino-acid biosynthesis; L-valine biosynthesis; L-valine from pyruvate: step 2/4. Involved in the biosynthesis of branched-chain amino acids (BCAA). Catalyzes an alkyl-migration followed by a ketol-acid reduction of (S)-2-acetolactate (S2AL) to yield (R)-2,3-dihydroxy-isovalerate. In the isomerase reaction, S2AL is rearranged via a Mg-dependent methyl migration to produce 3-hydroxy-3-methyl-2-ketobutyrate (HMKB). In the reductase reaction, this 2-ketoacid undergoes a metal-dependent reduction by NADPH to yield (R)-2,3-dihydroxy-isovalerate. This is Ketol-acid reductoisomerase (NADP(+)) from Pelagibacter ubique (strain HTCC1062).